The primary structure comprises 861 residues: Probable linoleate 9S-lipoxygenase 8 (861 aa).

In terms of domain architecture, PLAT spans 33–160 (FTDLASSLTG…NYKSDRIFFA (128 aa)). The Lipoxygenase domain maps to 163-861 (PYLPSETPEL…GKGIPNSVSI (699 aa)). A disordered region spans residues 220 to 245 (TLGGSAEYPYPRRGRTGRPPTRTDPK). Positions 522, 527, 713, 717, and 861 each coordinate Fe cation.

This sequence belongs to the lipoxygenase family. Monomer. It depends on Fe cation as a cofactor.

Its subcellular location is the cytoplasm. It carries out the reaction (9Z,12Z)-octadecadienoate + O2 = (9S)-hydroperoxy-(10E,12Z)-octadecadienoate. It functions in the pathway lipid metabolism; oxylipin biosynthesis. In terms of biological role, plant lipoxygenases may be involved in a number of diverse aspects of plant physiology including growth and development, pest resistance, and senescence or responses to wounding. Catalyzes the hydroperoxidation of lipids containing a cis,cis-1,4-pentadiene structure. The sequence is that of Probable linoleate 9S-lipoxygenase 8 (LOX1.8) from Solanum tuberosum (Potato).